Here is a 607-residue protein sequence, read N- to C-terminus: MEAPVARLFLLLLLGSWTPAPGSASSEAPPLINEDVKRTVDLSSHLAKVTAEVVLAHLGGSSTSRATSFLLALEPELEARLAHLGVQVKGEDEEDNNLEVRETKIKGKSGRFFIVKLPVALDPGAKISVIVETVYTHVLQPYPTQITQSEKQFVVFEGNHYFYSPYPTKTQTMRVKLASRNVESYTKLGNPTRSEDLLDYGPFRDVPAYSQDTFKVHYENNSPFLTITSMTRVIEVSHWGNIAVEENVDLKHTGAVLKGPFSRYDYQRQPDSGISSIRSFKTILPAAAQDVYYRDEIGNVSTSHLLILDDSVEMEIRPRFPLFGGWKTHYIVGYNLPSYEYLYNLGDQYALKMRFVDHVFDEQVIDSLTVKIILPEGAKNIEIDSPYEISRAPDELHYTYLDTFGRPVIVAYKKNLVEQHIQDIVVHYTFNKVLMLQEPLLVVAAFYILFFTVIIYVRLDFSITKDPAAEARMKVACITEQVLTLVNKRIGLYRHFDETVNRYKQSRDISTLNSGKKSLETEHKALTSEIALLQSRLKTEGSDLCDRVSEMQKLDAQVKELVLKSAVEAERLVAGKLKKDTYIENEKLISGKRQELVTKIDHILDAL.

Residues 1 to 23 form the signal peptide; it reads MEAPVARLFLLLLLGSWTPAPGS. The Lumenal segment spans residues 24 to 434; that stretch reads ASSEAPPLIN…VVHYTFNKVL (411 aa). Lys187 is modified (N6-acetyllysine). Asn299 carries N-linked (GlcNAc...) asparagine glycosylation. Residues 435-455 traverse the membrane as a helical segment; sequence MLQEPLLVVAAFYILFFTVII. Residues 456–607 are Cytoplasmic-facing; the sequence is YVRLDFSITK…TKIDHILDAL (152 aa). Lys538 is modified (N6-acetyllysine; alternate). Lys538 is covalently cross-linked (Glycyl lysine isopeptide (Lys-Gly) (interchain with G-Cter in SUMO2); alternate).

It belongs to the OST1 family. Component of the oligosaccharyltransferase (OST) complex. OST exists in two different complex forms which contain common core subunits RPN1, RPN2, OST48, OST4, DAD1 and TMEM258, either STT3A or STT3B as catalytic subunits, and form-specific accessory subunits. STT3A complex assembly occurs through the formation of 3 subcomplexes. Subcomplex 1 contains RPN1 and TMEM258, subcomplex 2 contains the STT3A-specific subunits STT3A, DC2/OSTC, and KCP2 as well as the core subunit OST4, and subcomplex 3 contains RPN2, DAD1, and OST48. The STT3A complex can form stable complexes with the Sec61 complex or with both the Sec61 and TRAP complexes. Interacts with TMEM35A/NACHO. Post-translationally, ubiquitinated by the ECS(ASB11) complex. Ufmylated by UFL1 in response to endoplasmic reticulum stress, promoting reticulophagy of endoplasmic reticulum sheets.

Its subcellular location is the endoplasmic reticulum membrane. It functions in the pathway protein modification; protein glycosylation. Functionally, subunit of the oligosaccharyl transferase (OST) complex that catalyzes the initial transfer of a defined glycan (Glc(3)Man(9)GlcNAc(2) in eukaryotes) from the lipid carrier dolichol-pyrophosphate to an asparagine residue within an Asn-X-Ser/Thr consensus motif in nascent polypeptide chains, the first step in protein N-glycosylation. N-glycosylation occurs cotranslationally and the complex associates with the Sec61 complex at the channel-forming translocon complex that mediates protein translocation across the endoplasmic reticulum (ER). All subunits are required for a maximal enzyme activity. This chain is Dolichyl-diphosphooligosaccharide--protein glycosyltransferase subunit 1, found in Macaca fascicularis (Crab-eating macaque).